Here is an 84-residue protein sequence, read N- to C-terminus: uncharacterized protein (84 aa).

This is an uncharacterized protein from Saccharomyces cerevisiae (strain ATCC 204508 / S288c) (Baker's yeast).